Here is an 80-residue protein sequence, read N- to C-terminus: Putative ATP-dependent Clp protease proteolytic subunit (80 aa).

Residue His-19 is part of the active site.

It belongs to the peptidase S14 family. In terms of assembly, component of the chloroplastic Clp protease core complex.

It is found in the plastid. Its subcellular location is the chloroplast. It carries out the reaction Hydrolysis of proteins to small peptides in the presence of ATP and magnesium. alpha-casein is the usual test substrate. In the absence of ATP, only oligopeptides shorter than five residues are hydrolyzed (such as succinyl-Leu-Tyr-|-NHMec, and Leu-Tyr-Leu-|-Tyr-Trp, in which cleavage of the -Tyr-|-Leu- and -Tyr-|-Trp bonds also occurs).. Functionally, cleaves peptides in various proteins in a process that requires ATP hydrolysis. Has a chymotrypsin-like activity. Plays a major role in the degradation of misfolded proteins. The polypeptide is Putative ATP-dependent Clp protease proteolytic subunit (Pinus strobus (Eastern white pine)).